Consider the following 124-residue polypeptide: MADLKAFAEQLVNLTVKEVNELATILKEEYGIEPAAAAVAVAAGPAAGAAAAEEKSSFDVVLKSAGAAKLQVVKAVKEACGLGLKEAKDMVDGAPSVVKEGLAKDEAESLKKTLEEAGAEVELK.

This sequence belongs to the bacterial ribosomal protein bL12 family. As to quaternary structure, homodimer. Part of the ribosomal stalk of the 50S ribosomal subunit. Forms a multimeric L10(L12)X complex, where L10 forms an elongated spine to which 2 to 4 L12 dimers bind in a sequential fashion. Binds GTP-bound translation factors.

In terms of biological role, forms part of the ribosomal stalk which helps the ribosome interact with GTP-bound translation factors. Is thus essential for accurate translation. In Bacteroides fragilis (strain ATCC 25285 / DSM 2151 / CCUG 4856 / JCM 11019 / LMG 10263 / NCTC 9343 / Onslow / VPI 2553 / EN-2), this protein is Large ribosomal subunit protein bL12.